Here is a 74-residue protein sequence, read N- to C-terminus: Protein SlyX homolog (74 aa).

This sequence belongs to the SlyX family.

The sequence is that of Protein SlyX homolog from Neisseria meningitidis serogroup A / serotype 4A (strain DSM 15465 / Z2491).